A 499-amino-acid chain; its full sequence is Glycerol kinase (499 aa).

Residue Thr12 coordinates ADP. ATP contacts are provided by Thr12, Thr13, and Ser14. Residue Thr12 participates in sn-glycerol 3-phosphate binding. An ADP-binding site is contributed by Arg16. Sn-glycerol 3-phosphate-binding residues include Arg82, Glu83, Tyr134, and Asp243. The glycerol site is built by Arg82, Glu83, Tyr134, Asp243, and Gln244. ADP-binding residues include Thr265 and Gly308. The ATP site is built by Thr265, Gly308, Gln312, and Gly409. ADP-binding residues include Gly409 and Asn413.

It belongs to the FGGY kinase family. In terms of assembly, homotetramer and homodimer (in equilibrium).

The enzyme catalyses glycerol + ATP = sn-glycerol 3-phosphate + ADP + H(+). It participates in polyol metabolism; glycerol degradation via glycerol kinase pathway; sn-glycerol 3-phosphate from glycerol: step 1/1. Activated by phosphorylation and inhibited by fructose 1,6-bisphosphate (FBP). Its function is as follows. Key enzyme in the regulation of glycerol uptake and metabolism. Catalyzes the phosphorylation of glycerol to yield sn-glycerol 3-phosphate. The sequence is that of Glycerol kinase from Lachnoclostridium phytofermentans (strain ATCC 700394 / DSM 18823 / ISDg) (Clostridium phytofermentans).